An 86-amino-acid polypeptide reads, in one-letter code: Small ribosomal subunit protein uS17 (86 aa).

This sequence belongs to the universal ribosomal protein uS17 family. Part of the 30S ribosomal subunit.

One of the primary rRNA binding proteins, it binds specifically to the 5'-end of 16S ribosomal RNA. The sequence is that of Small ribosomal subunit protein uS17 from Streptococcus pyogenes serotype M3 (strain ATCC BAA-595 / MGAS315).